The chain runs to 383 residues: Putative glutamate--cysteine ligase 2-2 (383 aa).

Positions 35 to 56 (RGDRDGAGGPPGGADPDGDLDG) are disordered.

The protein belongs to the glutamate--cysteine ligase type 2 family. YbdK subfamily.

It carries out the reaction L-cysteine + L-glutamate + ATP = gamma-L-glutamyl-L-cysteine + ADP + phosphate + H(+). Functionally, ATP-dependent carboxylate-amine ligase which exhibits weak glutamate--cysteine ligase activity. The polypeptide is Putative glutamate--cysteine ligase 2-2 (Frankia alni (strain DSM 45986 / CECT 9034 / ACN14a)).